We begin with the raw amino-acid sequence, 144 residues long: EF-hand calcium-binding domain-containing protein 8 (144 aa).

EF-hand domains follow at residues 52–86 (IHLA…VLSS) and 87–122 (VSDE…EFQG).

This chain is EF-hand calcium-binding domain-containing protein 8 (EFCAB8), found in Homo sapiens (Human).